Consider the following 227-residue polypeptide: Max dimerization protein 1 (227 aa).

Positions 21–48 (RREREAEHGYASMLPYSKDRDAFKRRNK) match the Nuclear localization signal motif. Disordered regions lie at residues 30-66 (YASM…MEKN), 142-161 (MDSV…REEL), and 184-227 (GWSS…GLGL). Residues 55–107 (SSRSTHNEMEKNRRAHLRLCLEKLKGLVPLGPESSRHTTLSLLTKAKLHIKKL) enclose the bHLH domain. Positions 198-211 (MQSLGSDEGYSSAT) are enriched in polar residues. Positions 216–227 (KLQDGHKAGLGL) are enriched in basic and acidic residues.

In terms of assembly, heterodimer with MAX; the interaction is required for DNA-binding. DNA binding requires dimerization with another bHLH protein; does not form homodimers, and does not bind to DNA in the absence of MAX in vitro. Interacts with RNF17. Post-translationally, ubiquitinated by BIRC2/c-IAP1, leading to its subsequent degradation by the proteasome.

The protein resides in the nucleus. In terms of biological role, component of a transcriptional repressor complex together with MAX. In complex with MAX binds to the core DNA sequence 5'-CAC[GA]TG-3'. Antagonizes MYC transcriptional activity by competing with MYC for MAX binding. Binds to the TERT promoter and represses telomerase expression, possibly by interfering with MYC binding. The chain is Max dimerization protein 1 (Mxd1) from Mus musculus (Mouse).